A 151-amino-acid polypeptide reads, in one-letter code: Deoxyuridine 5'-triphosphate nucleotidohydrolase (151 aa).

Residues 70-72 (RSG), Asn-83, 87-89 (LID), and Met-97 contribute to the substrate site.

Belongs to the dUTPase family. Mg(2+) serves as cofactor.

The catalysed reaction is dUTP + H2O = dUMP + diphosphate + H(+). Its pathway is pyrimidine metabolism; dUMP biosynthesis; dUMP from dCTP (dUTP route): step 2/2. In terms of biological role, this enzyme is involved in nucleotide metabolism: it produces dUMP, the immediate precursor of thymidine nucleotides and it decreases the intracellular concentration of dUTP so that uracil cannot be incorporated into DNA. The polypeptide is Deoxyuridine 5'-triphosphate nucleotidohydrolase (Azotobacter vinelandii (strain DJ / ATCC BAA-1303)).